Reading from the N-terminus, the 422-residue chain is Enolase (422 aa).

Gln-161 contacts (2R)-2-phosphoglycerate. The active-site Proton donor is Glu-203. Mg(2+)-binding residues include Asp-240, Glu-283, and Asp-310. (2R)-2-phosphoglycerate-binding residues include Lys-335, Arg-364, Ser-365, and Lys-386. Residue Lys-335 is the Proton acceptor of the active site.

This sequence belongs to the enolase family. Requires Mg(2+) as cofactor.

The protein localises to the cytoplasm. The protein resides in the secreted. It localises to the cell surface. It catalyses the reaction (2R)-2-phosphoglycerate = phosphoenolpyruvate + H2O. Its pathway is carbohydrate degradation; glycolysis; pyruvate from D-glyceraldehyde 3-phosphate: step 4/5. Catalyzes the reversible conversion of 2-phosphoglycerate (2-PG) into phosphoenolpyruvate (PEP). It is essential for the degradation of carbohydrates via glycolysis. This is Enolase from Deinococcus geothermalis (strain DSM 11300 / CIP 105573 / AG-3a).